The following is a 136-amino-acid chain: Peptide deformylase (136 aa).

Fe cation-binding residues include C85 and H126. Residue E127 is part of the active site. H130 is a Fe cation binding site.

It belongs to the polypeptide deformylase family. The cofactor is Fe(2+).

It catalyses the reaction N-terminal N-formyl-L-methionyl-[peptide] + H2O = N-terminal L-methionyl-[peptide] + formate. Removes the formyl group from the N-terminal Met of newly synthesized proteins. Requires at least a dipeptide for an efficient rate of reaction. N-terminal L-methionine is a prerequisite for activity but the enzyme has broad specificity at other positions. The chain is Peptide deformylase from Clostridium beijerinckii (strain ATCC 51743 / NCIMB 8052) (Clostridium acetobutylicum).